We begin with the raw amino-acid sequence, 433 residues long: Nuclear distribution protein PAC1 (433 aa).

The region spanning 8-40 is the LisH domain; sequence QKDELHRAMLAYLHAAGMHNAYAALQHDAALAD. Residues 57-84 adopt a coiled-coil conformation; the sequence is SVIRLQKKVIDLENRNAALLAELAAAAR. WD repeat units follow at residues 103–144, 146–184, 188–227, 230–269, 272–336, 339–378, and 381–429; these read SHRA…RTLK, HTKAVMDVDFDPRGGLMATCSSDLTLKLWDTANQYTNVK, GHDHSVSSVRFMPDGETLVSASRDKTIRVWQVSSGYCIKT, GHAEWVREAVPSEDGRWLVSASNDQTSRIWDFSTGETKME, GHEH…CLRT, GHDNWIRALVFHPSGKYLLSASDDKTIKVWDLANGRCTKT, and AHSH…QTIK.

The protein belongs to the WD repeat LIS1/nudF family. In terms of assembly, self-associates. Interacts with NDL1 and dynein.

Its subcellular location is the cytoplasm. The protein resides in the cytoskeleton. It is found in the spindle pole. Its function is as follows. Positively regulates the activity of the minus-end directed microtubule motor protein dynein. Plays a central role in positioning the mitotic spindle at the bud neck during cell division. Targets cytoplasmic dynein to microtubule plus ends, thereby promoting dynein-mediated microtubule sliding along the bud cortex and consequently the movement of the mitotic spindle to the bud neck. This Cryptococcus neoformans var. neoformans serotype D (strain B-3501A) (Filobasidiella neoformans) protein is Nuclear distribution protein PAC1.